Here is a 361-residue protein sequence, read N- to C-terminus: Palmitoyltransferase ZDHHC16 (361 aa).

Residues 1–77 (MRGQRSLLLG…VYWLVDNVIR (77 aa)) are Cytoplasmic-facing. A helical transmembrane segment spans residues 78-98 (WFGVVFVVLVIVLTGSIVAIA). Topologically, residues 99 to 116 (YLCVLPLILRTYSVPRLC) are lumenal. A helical membrane pass occupies residues 117–137 (WHFFYSHWNLILIVFHYYQAI). The Cytoplasmic portion of the chain corresponds to 138-198 (TTPPGYPPQG…NNCVGHYNHR (61 aa)). Positions 155–205 (SICKKCIYPKPARTHHCSICNRCVLKMDHHCPWLNNCVGHYNHRYFFSFCF) constitute a DHHC domain. Cys-185 (S-palmitoyl cysteine intermediate) is an active-site residue. A helical membrane pass occupies residues 199–219 (YFFSFCFFMTLGCVYCSYGSW). The Lumenal portion of the chain corresponds to 220–250 (DLFREAYAAIETYHQTPPPTFSFRERITHKS). Residues 251–271 (LVYLWFLCSSVALALGALTMW) traverse the membrane as a helical segment. Over 272–361 (HAVLISRGET…TAHSASVMAV (90 aa)) the chain is Cytoplasmic.

It belongs to the DHHC palmitoyltransferase family. Interacts with ABL1. Interacts with COPS5. In terms of tissue distribution, ubiquitously expressed.

The protein resides in the endoplasmic reticulum membrane. The enzyme catalyses L-cysteinyl-[protein] + hexadecanoyl-CoA = S-hexadecanoyl-L-cysteinyl-[protein] + CoA. Functionally, palmitoyl acyltransferase that mediates palmitoylation of proteins such as PLN and ZDHHC6. Required during embryonic heart development and cardiac function, possibly by mediating palmitoylation of PLN, thereby affecting PLN phosphorylation and homooligomerization. Also required for eye development. Palmitoylates ZDHHC6, affecting the quaternary assembly of ZDHHC6, its localization, stability and function. May play a role in DNA damage response. May be involved in apoptosis regulation. Involved in the proliferation of neural stem cells by regulating the FGF/ERK pathway. This chain is Palmitoyltransferase ZDHHC16, found in Mus musculus (Mouse).